The chain runs to 342 residues: Alpha-(1,3)-fucosyltransferase 7 (342 aa).

Residues 1 to 11 are Cytoplasmic-facing; sequence MQNAGLSPTPS. Residues 12-31 traverse the membrane as a helical; Signal-anchor for type II membrane protein segment; sequence LRALGGLAMAALLSTVWLWW. The Extracellular segment spans residues 32–342; sequence RLGAAPGGAP…YQDLEGWFQA (311 aa). C68 and C76 are oxidised to a cystine. A glycan (N-linked (GlcNAc...) asparagine) is linked at N81. A disulfide bridge links C211 with C214. Residue N291 is glycosylated (N-linked (GlcNAc...) asparagine). A disulfide bridge links C318 with C321.

The protein belongs to the glycosyltransferase 10 family. In terms of processing, N-glycosylated. Expressed in thymus, spleen, liver and lung. Highly expressed in the thymus and lower expressed in the lung.

It is found in the membrane. It catalyses the reaction an N-acetyl-alpha-neuraminyl-(2-&gt;3)-beta-D-galactosyl-(1-&gt;4)-N-acetyl-beta-D-glucosaminyl derivative + GDP-beta-L-fucose = an alpha-Neu5Ac-(2-&gt;3)-beta-D-Gal-(1-&gt;4)-[alpha-L-Fuc-(1-&gt;3)]-beta-D-GlcNAc derivative + GDP + H(+). The catalysed reaction is a neolactoside IV(3)-alpha-NeuAc-nLc4Cer + GDP-beta-L-fucose = a neolactoside IV(3)-alpha-NeuNAc,III(3)-alpha-Fuc-nLc4Cer + GDP + H(+). It carries out the reaction a neolactoside VI(3)-alpha-NeuNAc-nLc6Cer + GDP-beta-L-fucose = a neolactoside VI(3)-alpha-NeuAc,V(3)-alphaFuc-nLc6Cer + GDP + H(+). The enzyme catalyses an alpha-Neu5Ac-(2-&gt;3)-beta-D-Gal-(1-&gt;4)-beta-D-GlcNAc-(1-&gt;3)-beta-D-Gal-(1-&gt;4)-[alpha-L-Fuc-(1-&gt;3)]-beta-D-GlcNAc derivative + GDP-beta-L-fucose = an alpha-Neu5Ac-(2-&gt;3)-beta-D-Gal-(1-&gt;4)-[alpha-L-Fuc-(1-&gt;3)]-beta-D-GlcNAc-(1-&gt;3)-beta-D-Gal-(1-&gt;4)-[alpha-L-Fuc-(1-&gt;3)]-beta-D-GlcNAc derivative + GDP + H(+). It catalyses the reaction an alpha-Neu5Ac-(2-&gt;3)-beta-D-Gal-(1-&gt;4)-beta-D-GlcNAc6S derivative + GDP-beta-L-fucose = an alpha-Neu5Ac-(2-&gt;3)-beta-D-Gal-(1-&gt;4)-[alpha-L-Fuc-(1-&gt;3)]-beta-D-GlcNAc6S derivative + GDP + H(+). The catalysed reaction is alpha-Neu5Ac-(2-&gt;3)-beta-D-Gal-(1-&gt;4)-beta-D-GlcNAc-(1-&gt;3)-beta-D-Gal-(1-&gt;4)-D-Glc + GDP-beta-L-fucose = alpha-Neu5Ac-(2-&gt;3)-beta-D-Gal-(1-&gt;4)-[alpha-L-Fuc-(1-&gt;3)]-beta-D-GlcNAc-(1-&gt;3)-beta-D-Gal-(1-&gt;4)-D-Glc + GDP + H(+). It carries out the reaction alpha-Neu5Ac-(2-&gt;3)-beta-D-Gal-(1-&gt;4)-beta-D-GlcNAc-(1-&gt;3)-beta-D-Gal-(1-&gt;4)-[alpha-L-Fuc-(1-&gt;3)]-beta-D-GlcNAc-(1-&gt;3)-beta-D-Gal-(1-&gt;4)-beta-D-GlcNAc + GDP-beta-L-fucose = alpha-Neu5Ac-(2-&gt;3)-beta-D-Gal-(1-&gt;4)-[alpha-L-Fuc-(1-&gt;3)]-beta-D-GlcNAc-(1-&gt;3)-beta-D-Gal-(1-&gt;4)-[alpha-L-Fuc-(1-&gt;3)]-beta-D-GlcNAc-(1-&gt;3)-beta-D-Gal-(1-&gt;4)-beta-D-GlcNAc + GDP + H(+). The enzyme catalyses alpha-Neu5Ac-(2-&gt;3)-beta-D-Gal-(1-&gt;4)-beta-D-GlcNAc-(1-&gt;3)-beta-D-Gal-(1-&gt;4)-beta-D-GlcNAc-(1-&gt;3)-beta-D-Gal-(1-&gt;4)-beta-D-GlcNAc + GDP-beta-L-fucose = alpha-Neu5Ac-(2-&gt;3)-beta-D-Gal-(1-&gt;4)-[alpha-L-Fuc-(1-&gt;3)]-beta-D-GlcNAc-(1-&gt;3)-beta-D-Gal-(1-&gt;4)-beta-D-GlcNAc-(1-&gt;3)-beta-D-Gal-(1-&gt;4)-beta-D-GlcNAc + GDP + H(+). The protein operates within protein modification; protein glycosylation. Inhibited by NaCl. Inhibited by GDP in a concentration dependent manner, with an IC(50) value of 93 uM. Also inhibited by GMP and GTP. Inhibited by N-ethylmaleimide. Activated by poly(ethylene glycol) by enhancing the thermal stability of FUT7. Activated by Mn2+, Ca2+, and Mg2+. Both panosialin A and B inhibit activity with IC(50) values of 4.8 and 5.3 ug/ml, respectively. Inhibited by gallic acid (GA) and (-)-epigallocatechin gallate (EGCG) in a time-dependent and irreversible manner with IC(50) values of 60 and 700 nM, respectively. In terms of biological role, catalyzes the transfer of L-fucose, from a guanosine diphosphate-beta-L-fucose, to the N-acetyl glucosamine (GlcNAc) of a distal alpha2,3 sialylated lactosamine unit of a glycoprotein or a glycolipid-linked sialopolylactosamines chain through an alpha-1,3 glycosidic linkage and participates in the final fucosylation step in the biosynthesis of the sialyl Lewis X (sLe(x)), a carbohydrate involved in cell and matrix adhesion during leukocyte trafficking and fertilization. In vitro, also synthesizes sialyl-dimeric-Lex structures, from VIM-2 structures and both di-fucosylated and trifucosylated structures from mono-fucosylated precursors. However does not catalyze alpha 1-3 fucosylation when an internal alpha 1-3 fucosylation is present in polylactosamine chain and the fucosylation rate of the internal GlcNAc residues is reduced once fucose has been added to the distal GlcNAc. Also catalyzes the transfer of a fucose from GDP-beta-fucose to the 6-sulfated a(2,3)sialylated substrate to produce 6-sulfo sLex mediating significant L-selectin-dependent cell adhesion. Through sialyl-Lewis(x) biosynthesis, can control SELE- and SELP-mediated cell adhesion with leukocytes and allows leukocytes tethering and rolling along the endothelial tissue thereby enabling the leukocytes to accumulate at a site of inflammation. May enhance embryo implantation through sialyl Lewis X (sLeX)-mediated adhesion of embryo cells to endometrium. May affect insulin signaling by up-regulating the phosphorylation and expression of some signaling molecules involved in the insulin-signaling pathway through SLe(x) which is present on the glycans of the INSRR alpha subunit. The polypeptide is Alpha-(1,3)-fucosyltransferase 7 (Bos taurus (Bovine)).